The primary structure comprises 895 residues: Splicing factor 3B subunit 2 (895 aa).

Over residues 1–10 the composition is skewed to basic and acidic residues; that stretch reads MATEHPEPPK. Disordered regions lie at residues 1 to 24, 65 to 136, 197 to 373, and 400 to 453; these read MATE…PGHY, LNRP…LRVG, AKMG…EYVT, and KKEK…SKKK. Residue Lys10 forms a Glycyl lysine isopeptide (Lys-Gly) (interchain with G-Cter in SUMO2) linkage. An SAP domain is found at 24–58; the sequence is YGAWAAQELQAKLAEIGAPIQGNREELVERLQSYT. 2 stretches are compositionally biased toward pro residues: residues 90–114 and 122–133; these read IPMP…PPPG and AHPPNLGPPPPL. A coiled-coil region spans residues 140-199; the sequence is ALSEEERLKLAQQQAALLMQQEERAKQQGDHSLKEHELLEQQKRAAVLLEQERQQEIAKM. Positions 218-238 are enriched in low complexity; the sequence is PLGPRVAAPVGPVGPTPTVLP. Arg222, Arg245, and Arg247 each carry omega-N-methylarginine. The segment covering 241–254 has biased composition (pro residues); that stretch reads APVPRPRGPPPPPG. Lys275 carries the post-translational modification N6-acetyllysine. Residues 277-286 show a composition bias toward basic and acidic residues; the sequence is LQLKESRQEE. Lys280 participates in a covalent cross-link: Glycyl lysine isopeptide (Lys-Gly) (interchain with G-Cter in SUMO2). Residue Ser289 is modified to Phosphoserine. The residue at position 298 (Thr298) is a Phosphothreonine. 2 positions are modified to phosphoserine: Ser307 and Ser309. Position 311 is a phosphothreonine (Thr311). Position 317 is a phosphoserine (Ser317). The span at 322-338 shows a compositional bias: basic residues; the sequence is EKNRKRRNRKKKKKPQR. Residues 347–359 are compositionally biased toward basic and acidic residues; it reads SGDREKDSTRSRG. Residues Ser360 and Ser362 each carry the phosphoserine modification. Residues Lys400 and Lys412 each participate in a glycyl lysine isopeptide (Lys-Gly) (interchain with G-Cter in SUMO2) cross-link. Composition is skewed to basic and acidic residues over residues 400–414 and 422–431; these read KKEK…DKLE and KGFEEEHKDS. The segment at 401–550 is required for interaction with PRMT9; that stretch reads KEKEKEPEKL…QEKEEQKTMK (150 aa). Ser431, Ser435, and Ser436 each carry phosphoserine. A Glycyl lysine isopeptide (Lys-Gly) (interchain with G-Cter in SUMO2) cross-link involves residue Lys492. Arg508 bears the Omega-N-methylarginine; by PRMT9; alternate mark. Arg508 carries the symmetric dimethylarginine; by PRMT9; alternate modification. Arg515 is modified (omega-N-methylarginine). A Glycyl lysine isopeptide (Lys-Gly) (interchain with G-Cter in SUMO2) cross-link involves residue Lys543. Residues 691–757 are disordered; the sequence is AAEFQTKTEE…PGGFSSVPAG (67 aa). Positions 712 to 732 are enriched in acidic residues; that stretch reads EPSDEESSEEEEEEESDEDKP. A Glycyl lysine isopeptide (Lys-Gly) (interchain with G-Cter in SUMO2) cross-link involves residue Lys770. The residue at position 780 (Thr780) is a Phosphothreonine. Residues Lys790, Lys843, and Lys857 each participate in a glycyl lysine isopeptide (Lys-Gly) (interchain with G-Cter in SUMO2) cross-link. Basic and acidic residues predominate over residues 844-869; it reads YEEHVREQQAQVEKEDFSDMVAEHAA. A disordered region spans residues 844-895; that stretch reads YEEHVREQQAQVEKEDFSDMVAEHAAKQKQKKRKAQPQDSRGGSKKYKEFKF. Ser861 is subject to Phosphoserine.

Component of the 17S U2 SnRNP complex, a ribonucleoprotein complex that contains small nuclear RNA (snRNA) U2 and a number of specific proteins. Part of the SF3B subcomplex of the 17S U2 SnRNP complex. SF3B associates with the splicing subcomplex SF3A and a 12S RNA unit to form the U2 small nuclear ribonucleoproteins complex (U2 snRNP). Within the SF3B complex, interacts directly with SF3B4. Found in a complex with PRMT9, SF3B2 and SF3B4. Interacts (Arg-508-methylated form) with SMN1 (via Tudor domain). Interacts with RBM7. Interacts with ERCC6. Component of the minor spliceosome. Within this complex, interacts with SCNM1 and CRIPT. In terms of assembly, (Microbial infection) Interacts with HIV-1 Vpr. Methylation at Arg-508 by PRMT9 is required for the interaction with SMN1.

The protein resides in the nucleus. It is found in the nucleus speckle. Component of the 17S U2 SnRNP complex of the spliceosome, a large ribonucleoprotein complex that removes introns from transcribed pre-mRNAs. The 17S U2 SnRNP complex (1) directly participates in early spliceosome assembly and (2) mediates recognition of the intron branch site during pre-mRNA splicing by promoting the selection of the pre-mRNA branch-site adenosine, the nucleophile for the first step of splicing. Within the 17S U2 SnRNP complex, SF3B2 is part of the SF3B subcomplex, which is required for 'A' complex assembly formed by the stable binding of U2 snRNP to the branchpoint sequence in pre-mRNA. Sequence independent binding of SF3A and SF3B subcomplexes upstream of the branch site is essential, it may anchor U2 snRNP to the pre-mRNA. May also be involved in the assembly of the 'E' complex. Also acts as a component of the minor spliceosome, which is involved in the splicing of U12-type introns in pre-mRNAs. This chain is Splicing factor 3B subunit 2 (SF3B2), found in Homo sapiens (Human).